Reading from the N-terminus, the 262-residue chain is Carbonic anhydrase 13 (262 aa).

The 258-residue stretch at 4 to 261 (LSWGYREHNG…LKGRKVRASF (258 aa)) folds into the Alpha-carbonic anhydrase domain. Catalysis depends on His65, which acts as the Proton donor/acceptor. His95, His97, and His120 together coordinate Zn(2+). 200-201 (TV) contributes to the substrate binding site.

The protein belongs to the alpha-carbonic anhydrase family. The cofactor is Zn(2+). Expressed in thymus, small intestine, spleen, prostate, ovary, colon and testis.

The enzyme catalyses hydrogencarbonate + H(+) = CO2 + H2O. Its activity is regulated as follows. Inhibited by acetazolamide. Its function is as follows. Reversible hydration of carbon dioxide. In Homo sapiens (Human), this protein is Carbonic anhydrase 13 (CA13).